Here is an 81-residue protein sequence, read N- to C-terminus: Small cysteine-rich protein 4 (81 aa).

The signal sequence occupies residues Met1 to Ser23. Residues Gly24–Asn25 constitute a propeptide that is removed on maturation.

It belongs to the Cnidaria small cysteine-rich protein (SCRiP) family. beta subfamily. Contains 4 disulfide bonds.

The protein localises to the secreted. The protein resides in the nematocyst. Induces neurotoxic symptoms on zebrafish. Has also been claimed to be implied in calcification, but tests on homolog proteins suggest that proteins of this family have a neurotoxic function and not a calcification function. This Orbicella faveolata (Mountainous star coral) protein is Small cysteine-rich protein 4.